Consider the following 72-residue polypeptide: UPF0270 protein ETA_31870 (72 aa).

Belongs to the UPF0270 family.

The sequence is that of UPF0270 protein ETA_31870 from Erwinia tasmaniensis (strain DSM 17950 / CFBP 7177 / CIP 109463 / NCPPB 4357 / Et1/99).